An 895-amino-acid chain; its full sequence is Glutamate receptor 2.3 (895 aa).

An N-terminal signal peptide occupies residues 1 to 23 (MRTEKLFFCILLVFFFCLEFNRG). The Extracellular portion of the chain corresponds to 24-582 (QNNGKTLVDV…ILFMKPLSWK (559 aa)). N52, N203, N266, N330, N342, N477, and N542 each carry an N-linked (GlcNAc...) asparagine glycan. A helical transmembrane segment spans residues 583 to 603 (LWLTSFISFFLVGCTVWVLEY). Topologically, residues 604 to 610 (KRNPDFS) are cytoplasmic. Residues 611-631 (GPPRFQASTICWFAFSTMVFA) traverse the membrane as a helical segment. Residues 632 to 635 (PRER) are Cytoplasmic-facing. Residues 636-656 (VFSFWARALVIAWYFLVLVLT) traverse the membrane as a helical segment. Residues 657-830 (QSYTASLASL…FTSRQLDIDS (174 aa)) are Extracellular-facing. The chain crosses the membrane as a helical span at residues 831–851 (FLFLFVGVLLVCVMALGNFTY). The Cytoplasmic portion of the chain corresponds to 852–895 (CFLAKDQVSYLDKVEMSPCSSSQQMPVKRKTQLNMSQVHDQDSL). The interval 873 to 895 (SQQMPVKRKTQLNMSQVHDQDSL) is disordered.

The protein belongs to the glutamate-gated ion channel (TC 1.A.10.1) family. In terms of assembly, may form heteromers. As to expression, expressed predominantly in roots.

It localises to the membrane. Its function is as follows. Glutamate-gated receptor that probably acts as a non-selective cation channel. May be involved in light-signal transduction and calcium homeostasis via the regulation of calcium influx into cells. This is Glutamate receptor 2.3 (GLR2.3) from Arabidopsis thaliana (Mouse-ear cress).